Here is a 172-residue protein sequence, read N- to C-terminus: Monopolar attachment protein 1 (172 aa).

The span at 15-30 shows a compositional bias: basic residues; that stretch reads KKNKNPKISNSKKKNS. Residues 15-43 form a disordered region; it reads KKNKNPKISNSKKKNSTRPALQDKTNQTL. Over residues 31–43 the composition is skewed to polar residues; that stretch reads TRPALQDKTNQTL. The POLO box domain (PBD)-binding motif lies at 100 to 102; sequence STP.

As to quaternary structure, interacts with rec8, Interacts with plo1.

Its subcellular location is the nucleus. It localises to the chromosome. It is found in the centromere. The protein localises to the kinetochore. In terms of biological role, plays an important role in chromosome segregation during meiosis I by allowing meiotic rec8 to establish cohesion at the centromeric central core and thereby promote the side-by-side structure of kinetochores at meiosis I. Enables monopolar attachment during meiosis I. Required to facilitate kinetochore mono-orientation during meiosis I, when kinetochores on sister chromosomes face the same direction and are thus captured and pulled by spindle fibers from the same pole. Acts in collaboration with plo1. This Schizosaccharomyces pombe (strain 972 / ATCC 24843) (Fission yeast) protein is Monopolar attachment protein 1 (moa1).